The chain runs to 210 residues: Putative polysaccharide-binding protein (210 aa).

Residues 1–22 (MGFLKGTAAALTLLSAAAAASA) form the signal peptide. CBM1 domains follow at residues 23 to 62 (CGVL…AMPG), 63 to 105 (MMGQ…LANK), 125 to 165 (CGKE…APPP), and 166 to 210 (KMGE…PMHP).

This Porphyra purpurea (Red seaweed) protein is Putative polysaccharide-binding protein.